The sequence spans 321 residues: tRNA-dihydrouridine synthase B (321 aa).

FMN contacts are provided by residues 16–18 and glutamine 70; that span reads PMA. The active-site Proton donor is the cysteine 100. FMN is bound by residues lysine 139, 200-202, and 224-225; these read NGD and GR.

Belongs to the Dus family. DusB subfamily. The cofactor is FMN.

The enzyme catalyses a 5,6-dihydrouridine in tRNA + NAD(+) = a uridine in tRNA + NADH + H(+). It carries out the reaction a 5,6-dihydrouridine in tRNA + NADP(+) = a uridine in tRNA + NADPH + H(+). Catalyzes the synthesis of 5,6-dihydrouridine (D), a modified base found in the D-loop of most tRNAs, via the reduction of the C5-C6 double bond in target uridines. The sequence is that of tRNA-dihydrouridine synthase B from Shigella flexneri.